Here is a 399-residue protein sequence, read N- to C-terminus: Elongation factor Tu (399 aa).

In terms of domain architecture, tr-type G spans 10 to 209 (KPHVNIGTIG…AVDDYIPTPV (200 aa)). Positions 19–26 (GHVDHGKT) are G1. Position 19 to 26 (19 to 26 (GHVDHGKT)) interacts with GTP. T26 contacts Mg(2+). Positions 62-66 (GITIN) are G2. Residues 83 to 86 (DCPG) are G3. Residues 83–87 (DCPGH) and 138–141 (NKCD) each bind GTP. A G4 region spans residues 138–141 (NKCD). Residues 175-177 (SAY) are G5.

It belongs to the TRAFAC class translation factor GTPase superfamily. Classic translation factor GTPase family. EF-Tu/EF-1A subfamily. Monomer.

The protein resides in the cytoplasm. The enzyme catalyses GTP + H2O = GDP + phosphate + H(+). Functionally, GTP hydrolase that promotes the GTP-dependent binding of aminoacyl-tRNA to the A-site of ribosomes during protein biosynthesis. This Bifidobacterium longum subsp. infantis (strain ATCC 15697 / DSM 20088 / JCM 1222 / NCTC 11817 / S12) protein is Elongation factor Tu.